The primary structure comprises 96 residues: Invertase 7 (96 aa).

The first 19 residues, 1 to 19 (MLLQAFIFLLAGFAAKISA), serve as a signal peptide directing secretion. The N-linked (GlcNAc...) asparagine glycan is linked to N23. Substrate contacts are provided by residues 39-42 (WMND) and Q60. Residue D42 is part of the active site. 2 N-linked (GlcNAc...) asparagine glycosylation sites follow: N64 and N76.

Belongs to the glycosyl hydrolase 32 family.

The catalysed reaction is Hydrolysis of terminal non-reducing beta-D-fructofuranoside residues in beta-D-fructofuranosides.. The sequence is that of Invertase 7 (SUC7) from Saccharomyces cerevisiae (Baker's yeast).